The following is a 147-amino-acid chain: Peptide deformylase 1 (147 aa).

Cys90 and His132 together coordinate Fe cation. The active site involves Glu133. His136 contributes to the Fe cation binding site.

The protein belongs to the polypeptide deformylase family. Fe(2+) serves as cofactor.

The enzyme catalyses N-terminal N-formyl-L-methionyl-[peptide] + H2O = N-terminal L-methionyl-[peptide] + formate. Removes the formyl group from the N-terminal Met of newly synthesized proteins. Requires at least a dipeptide for an efficient rate of reaction. N-terminal L-methionine is a prerequisite for activity but the enzyme has broad specificity at other positions. The chain is Peptide deformylase 1 from Clostridium perfringens (strain 13 / Type A).